We begin with the raw amino-acid sequence, 1060 residues long: Carbamoyl phosphate synthase large chain (1060 aa).

Residues Met-1–Glu-401 form a carboxyphosphate synthetic domain region. ATP is bound by residues Arg-129, Arg-169, Gly-175, Gly-176, Arg-208, Ile-210, Glu-215, Gly-241, Ile-242, His-243, Gln-284, and Glu-298. The region spanning Lys-133–Val-327 is the ATP-grasp 1 domain. Residues Gln-284, Glu-298, and Asn-300 each coordinate Mg(2+). Mn(2+) contacts are provided by Gln-284, Glu-298, and Asn-300. The interval Ile-402–Ser-546 is oligomerization domain. The segment at Leu-547–Tyr-929 is carbamoyl phosphate synthetic domain. Positions Glu-671–Leu-861 constitute an ATP-grasp 2 domain. Residues Arg-707, Ala-746, Leu-748, Glu-752, Gly-777, Val-778, His-779, Ser-780, Gln-820, and Glu-832 each contribute to the ATP site. The Mg(2+) site is built by Gln-820, Glu-832, and Asn-834. Residues Gln-820, Glu-832, and Asn-834 each contribute to the Mn(2+) site. The region spanning Leu-930–Asp-1060 is the MGS-like domain. The segment at Leu-930–Asp-1060 is allosteric domain.

It belongs to the CarB family. As to quaternary structure, composed of two chains; the small (or glutamine) chain promotes the hydrolysis of glutamine to ammonia, which is used by the large (or ammonia) chain to synthesize carbamoyl phosphate. Tetramer of heterodimers (alpha,beta)4. Mg(2+) is required as a cofactor. It depends on Mn(2+) as a cofactor.

It catalyses the reaction hydrogencarbonate + L-glutamine + 2 ATP + H2O = carbamoyl phosphate + L-glutamate + 2 ADP + phosphate + 2 H(+). The catalysed reaction is hydrogencarbonate + NH4(+) + 2 ATP = carbamoyl phosphate + 2 ADP + phosphate + 2 H(+). It participates in amino-acid biosynthesis; L-arginine biosynthesis; carbamoyl phosphate from bicarbonate: step 1/1. Its pathway is pyrimidine metabolism; UMP biosynthesis via de novo pathway; (S)-dihydroorotate from bicarbonate: step 1/3. In terms of biological role, large subunit of the glutamine-dependent carbamoyl phosphate synthetase (CPSase). CPSase catalyzes the formation of carbamoyl phosphate from the ammonia moiety of glutamine, carbonate, and phosphate donated by ATP, constituting the first step of 2 biosynthetic pathways, one leading to arginine and/or urea and the other to pyrimidine nucleotides. The large subunit (synthetase) binds the substrates ammonia (free or transferred from glutamine from the small subunit), hydrogencarbonate and ATP and carries out an ATP-coupled ligase reaction, activating hydrogencarbonate by forming carboxy phosphate which reacts with ammonia to form carbamoyl phosphate. This is Carbamoyl phosphate synthase large chain from Streptococcus agalactiae serotype Ia (strain ATCC 27591 / A909 / CDC SS700).